The following is a 387-amino-acid chain: Exodeoxyribonuclease 7 large subunit (387 aa).

It belongs to the XseA family. As to quaternary structure, heterooligomer composed of large and small subunits.

It is found in the cytoplasm. It carries out the reaction Exonucleolytic cleavage in either 5'- to 3'- or 3'- to 5'-direction to yield nucleoside 5'-phosphates.. Functionally, bidirectionally degrades single-stranded DNA into large acid-insoluble oligonucleotides, which are then degraded further into small acid-soluble oligonucleotides. The polypeptide is Exodeoxyribonuclease 7 large subunit (Synechococcus sp. (strain CC9902)).